Consider the following 547-residue polypeptide: Ganoderic acid synthetase CYP5150L8 (547 aa).

The helical transmembrane segment at 2–22 (PDSSLVLVAIAGAAYIFWLVF) threads the bilayer. Residue Cys487 coordinates heme.

The protein belongs to the cytochrome P450 family. The cofactor is heme.

It localises to the membrane. The enzyme catalyses lanosterol + reduced [NADPH--hemoprotein reductase] + O2 = 26-hydroxylanosterol + oxidized [NADPH--hemoprotein reductase] + H2O + H(+). It catalyses the reaction 26-hydroxylanosterol + reduced [NADPH--hemoprotein reductase] + O2 = 26-oxolanosterol + oxidized [NADPH--hemoprotein reductase] + 2 H2O + H(+). It carries out the reaction 26-oxolanosterol + reduced [NADPH--hemoprotein reductase] + O2 = 3beta-hydroxy-lanosta-8, 24-dien-26-oate + oxidized [NADPH--hemoprotein reductase] + H2O + 2 H(+). The protein operates within secondary metabolite biosynthesis; terpenoid biosynthesis. In terms of biological role, cytochrome P450 monooxygenase that is involved in the biosynthesis of ganoderic acids (GA), a group of highly oxygenated lanostane-type triterpenoids which well recognized as a main group of unique bioactive compounds in the medicinal mushroom Ganoderma lucidum. CYP5150L8 alone is able to catalyze the three-step oxidations at C-26 from lanosterol to 3-hydroxy-lanosta-8,24-dien-26-oic acid (also called ganoderic acid Z or HLDOA). The methyl group of lanosterol at C-26 is first oxidized into hydroxyl group to form 3-hydroxy-lanosta-8,24-dien-26-ol (HLDO). The hydroxyl group at C-26 of HLDO is further converted into a formyl group to form 3-hydroxy-lanosta-8,24-dien-26-al (HLDA). Finally, the formyl group is oxidized into a carboxyl group to produce 3-hydroxy-lanosta-8,24-dien-26-oic acid (HLDOA). The protein is Ganoderic acid synthetase CYP5150L8 of Ganoderma lucidum (Ling zhi medicinal fungus).